A 322-amino-acid chain; its full sequence is Homoserine kinase (322 aa).

Residue 107–117 (PLSSGMGGSAA) participates in ATP binding.

This sequence belongs to the GHMP kinase family. Homoserine kinase subfamily.

It is found in the cytoplasm. It carries out the reaction L-homoserine + ATP = O-phospho-L-homoserine + ADP + H(+). The protein operates within amino-acid biosynthesis; L-threonine biosynthesis; L-threonine from L-aspartate: step 4/5. Functionally, catalyzes the ATP-dependent phosphorylation of L-homoserine to L-homoserine phosphate. This is Homoserine kinase from Xylella fastidiosa (strain 9a5c).